Reading from the N-terminus, the 351-residue chain is UDP-3-O-acylglucosamine N-acyltransferase (351 aa).

His-240 acts as the Proton acceptor in catalysis.

This sequence belongs to the transferase hexapeptide repeat family. LpxD subfamily. In terms of assembly, homotrimer.

It catalyses the reaction a UDP-3-O-[(3R)-3-hydroxyacyl]-alpha-D-glucosamine + a (3R)-hydroxyacyl-[ACP] = a UDP-2-N,3-O-bis[(3R)-3-hydroxyacyl]-alpha-D-glucosamine + holo-[ACP] + H(+). It participates in bacterial outer membrane biogenesis; LPS lipid A biosynthesis. Its function is as follows. Catalyzes the N-acylation of UDP-3-O-acylglucosamine using 3-hydroxyacyl-ACP as the acyl donor. Is involved in the biosynthesis of lipid A, a phosphorylated glycolipid that anchors the lipopolysaccharide to the outer membrane of the cell. The protein is UDP-3-O-acylglucosamine N-acyltransferase of Pseudomonas syringae pv. tomato (strain ATCC BAA-871 / DC3000).